A 1106-amino-acid chain; its full sequence is Inversin (1106 aa).

ANK repeat units lie at residues 13–42 (SLAS…ELKD), 47–76 (FGRT…DVNR), 80–110 (SRRT…WMQK), 113–144 (EGMT…EVDT), 148–177 (NKQT…NIGI), 181–213 (EGKI…TESL), 220–250 (EGRT…NVTS), 254–285 (LFRT…TIPS), 288–317 (QGAT…VKDD), 321–350 (EGRT…DIDI), 356–385 (YAGT…QVDA), 389–418 (MKHT…RVDL), 422–451 (DGHS…NPNV), 455–484 (AGRT…DPNI), 488–517 (EGRT…FPNH), and 523–553 (ERYT…SIAA). Residues 490–498 (RTALHWLCN) carry the D-box 1 motif. The region spanning 555–584 (QDIAAFKIQAVYKGYKVRKAFQERKNLLMK) is the IQ 1 domain. Positions 589 to 607 (RKDAAAKKREEESKRKEAS) are enriched in basic and acidic residues. Disordered regions lie at residues 589–615 (RKDA…MQNM), 636–688 (LQLS…ELQS), 746–782 (ANGT…GNRG), and 809–833 (AVPK…CSPA). 2 stretches are compositionally biased toward polar residues: residues 636–645 (LQLSNKQTDL) and 653–666 (VSAS…NSRG). Residues 812–822 (KSKRHQQKSRH) are compositionally biased toward basic residues. Positions 944–952 (RKELFRKKN) match the D-box 2 motif. In terms of domain architecture, IQ 2 spans 951 to 980 (KNYAATVIQRTWRSYRLRQELSQLLSAKRQ).

As to quaternary structure, binds calmodulin via its IQ domains. Interacts with APC2.

The protein resides in the cytoplasm. Its subcellular location is the cytoskeleton. Functionally, required for normal renal development and establishment of left-right axis. Probably acts as a molecular switch between different Wnt signaling pathways. Inhibits the canonical Wnt pathway by targeting cytoplasmic disheveled for degradation by the ubiquitin-proteasome. This suggests that it is required in renal development to oppose the repression of terminal differentiation of tubular epithelial cells by Wnt signaling. This Gallus gallus (Chicken) protein is Inversin (INVS).